We begin with the raw amino-acid sequence, 180 residues long: Colicin-E5 (180 aa).

Disordered stretches follow at residues 24 to 143 (AQTD…GSPG) and 155 to 180 (VTQI…KNDQ). Basic and acidic residues predominate over residues 54-76 (ESRKKKEDNKRDAEGKLNDELAK). The tract at residues 74–180 (LAKNKGKIPG…RIQWGNKNDQ (107 aa)) is nuclease. The span at 106-116 (NTVSNGATGTS) shows a compositional bias: polar residues. The span at 160 to 171 (DKTDPGWVDDSR) shows a compositional bias: basic and acidic residues.

It belongs to the colicin/pyosin nuclease family.

Colicins are polypeptide toxins produced by and active against E.coli and closely related bacteria. This colicin is an endonuclease. This Escherichia coli protein is Colicin-E5 (col).